Consider the following 180-residue polypeptide: Large ribosomal subunit protein uL5 (180 aa).

Belongs to the universal ribosomal protein uL5 family. Part of the 50S ribosomal subunit; part of the 5S rRNA/L5/L18/L25 subcomplex. Contacts the 5S rRNA and the P site tRNA. Forms a bridge to the 30S subunit in the 70S ribosome.

This is one of the proteins that bind and probably mediate the attachment of the 5S RNA into the large ribosomal subunit, where it forms part of the central protuberance. In the 70S ribosome it contacts protein S13 of the 30S subunit (bridge B1b), connecting the 2 subunits; this bridge is implicated in subunit movement. Contacts the P site tRNA; the 5S rRNA and some of its associated proteins might help stabilize positioning of ribosome-bound tRNAs. The sequence is that of Large ribosomal subunit protein uL5 from Lactiplantibacillus plantarum (strain ATCC BAA-793 / NCIMB 8826 / WCFS1) (Lactobacillus plantarum).